Reading from the N-terminus, the 364-residue chain is Peptide chain release factor 2 (364 aa).

N5-methylglutamine is present on Gln-251.

Belongs to the prokaryotic/mitochondrial release factor family. Methylated by PrmC. Methylation increases the termination efficiency of RF2.

Its subcellular location is the cytoplasm. Its function is as follows. Peptide chain release factor 2 directs the termination of translation in response to the peptide chain termination codons UGA and UAA. The polypeptide is Peptide chain release factor 2 (Campylobacter hominis (strain ATCC BAA-381 / DSM 21671 / CCUG 45161 / LMG 19568 / NCTC 13146 / CH001A)).